A 306-amino-acid chain; its full sequence is Glutaminase (306 aa).

The substrate site is built by Ser-64, Asn-115, Glu-159, Asn-166, Tyr-190, Tyr-242, and Val-260.

Belongs to the glutaminase family. As to quaternary structure, homotetramer.

The catalysed reaction is L-glutamine + H2O = L-glutamate + NH4(+). In Aeromonas salmonicida (strain A449), this protein is Glutaminase.